The sequence spans 366 residues: Dehydrogenase aclE (366 aa).

An N-terminal signal peptide occupies residues 1-19 (MSKRIRLGIVGLSADPSHC). An N-linked (GlcNAc...) asparagine glycan is attached at asparagine 330.

Belongs to the Gfo/Idh/MocA family.

It participates in mycotoxin biosynthesis. Functionally, dehydrogenase; part of the gene cluster that mediates the biosynthesis of aspirochlorine (or antibiotic A30641), an unusual halogenated spiro compound with distinctive antifungal properties due to selective inhibition of protein biosynthesis, and which is also active against bacteria, viruses, and murine tumor cells. The non-ribosomal peptide synthetase (NRPS) aclP is responsible the formation of the diketopiperazine (DKP) core from the condensation of 2 phenylalanine residues. One Phe residue is tailored into chlorotyrosine by hydroxylation and chlorination, whereas the second Phe undergoes an unprecedented C-C bond cleavage to be converted into glycine. After formation of the DKP, sulfur is incorporated into the DKP by conjugation with glutathione by aclG, followed by its stepwise degradation to the thiol by aclI, aclJ and aclK, and the dithiol oxidation by aclT. In addition, oxygenases (aclB, aclC, aclL and aclO) and O-methyltransferases (aclM and aclU) act as tailoring enzymes to produce the intermediate dechloroaspirochlorine. Ultimately, chlorination of dechloroaspirochlorine by the halogenase aclH is the last step in the aspirochlorine pathway. This chain is Dehydrogenase aclE, found in Aspergillus oryzae (strain ATCC 42149 / RIB 40) (Yellow koji mold).